Consider the following 1040-residue polypeptide: Multidrug resistance protein MdtB (1040 aa).

The next 12 membrane-spanning stretches (helical) occupy residues 16–36 (FIMR…AGII), 347–367 (LMMA…NIPA), 369–389 (IIPG…MVFL), 396–416 (LTLM…IVVI), 440–460 (IGFT…PLLF), 472–492 (FAIT…TLTP), 537–557 (WLTL…WVFI), 863–883 (LGST…VLGI), 888–908 (FIHP…ALLA), 911–931 (IAGS…IGIV), 968–988 (ILMT…STGV), and 998–1018 (IGMV…TPVI).

The protein belongs to the resistance-nodulation-cell division (RND) (TC 2.A.6) family. MdtB subfamily. Part of a tripartite efflux system composed of MdtA, MdtB and MdtC. MdtB forms a heteromultimer with MdtC.

It localises to the cell inner membrane. The MdtABC tripartite complex confers resistance against novobiocin and deoxycholate. The sequence is that of Multidrug resistance protein MdtB from Escherichia coli O9:H4 (strain HS).